A 105-amino-acid polypeptide reads, in one-letter code: UPF0235 protein RrIowa_1526 (105 aa).

Belongs to the UPF0235 family.

The sequence is that of UPF0235 protein RrIowa_1526 from Rickettsia rickettsii (strain Iowa).